The sequence spans 429 residues: Saccharopine dehydrogenase-like oxidoreductase (429 aa).

N-acetylalanine is present on alanine 2. Serine 209, serine 215, and serine 217 each carry phosphoserine.

Belongs to the saccharopine dehydrogenase family.

The polypeptide is Saccharopine dehydrogenase-like oxidoreductase (Sccpdh) (Mus musculus (Mouse)).